Consider the following 151-residue polypeptide: Phosphoribosyl-AMP cyclohydrolase (151 aa).

Positions 1–13 (MMTLTFASPPQNK) are enriched in polar residues. Residues 1 to 20 (MMTLTFASPPQNKSDLETGP) are disordered. Asp-93 is a Mg(2+) binding site. Cys-94 contributes to the Zn(2+) binding site. Mg(2+) contacts are provided by Asp-95 and Asp-97. Cys-112 and Cys-119 together coordinate Zn(2+).

The protein belongs to the PRA-CH family. Homodimer. Mg(2+) is required as a cofactor. The cofactor is Zn(2+).

It is found in the cytoplasm. The enzyme catalyses 1-(5-phospho-beta-D-ribosyl)-5'-AMP + H2O = 1-(5-phospho-beta-D-ribosyl)-5-[(5-phospho-beta-D-ribosylamino)methylideneamino]imidazole-4-carboxamide. The protein operates within amino-acid biosynthesis; L-histidine biosynthesis; L-histidine from 5-phospho-alpha-D-ribose 1-diphosphate: step 3/9. Functionally, catalyzes the hydrolysis of the adenine ring of phosphoribosyl-AMP. In Sinorhizobium medicae (strain WSM419) (Ensifer medicae), this protein is Phosphoribosyl-AMP cyclohydrolase.